A 659-amino-acid polypeptide reads, in one-letter code: Acetyl-coenzyme A synthetase (659 aa).

Residues 206–209 (RRGK) and Thr324 each bind CoA. ATP is bound by residues 400-402 (GEP), 424-429 (DTWWQT), Asp516, Arg531, and Arg542. 2 residues coordinate Mg(2+): Val553 and His555. Arg600 provides a ligand contact to CoA.

The protein belongs to the ATP-dependent AMP-binding enzyme family. It depends on Mg(2+) as a cofactor.

The enzyme catalyses acetate + ATP + CoA = acetyl-CoA + AMP + diphosphate. Its function is as follows. Catalyzes the conversion of acetate into acetyl-CoA (AcCoA), an essential intermediate at the junction of anabolic and catabolic pathways. AcsA undergoes a two-step reaction. In the first half reaction, AcsA combines acetate with ATP to form acetyl-adenylate (AcAMP) intermediate. In the second half reaction, it can then transfer the acetyl group from AcAMP to the sulfhydryl group of CoA, forming the product AcCoA. This is Acetyl-coenzyme A synthetase (acsA) from Methanothrix thermoacetophila (strain DSM 6194 / JCM 14653 / NBRC 101360 / PT) (Methanosaeta thermophila).